The primary structure comprises 728 residues: Polyphosphate kinase (728 aa).

Asn-57 lines the ATP pocket. Mg(2+)-binding residues include Arg-408 and Arg-438. The Phosphohistidine intermediate role is filled by His-468. Residues Tyr-501, Arg-597, and His-625 each coordinate ATP. The interval 694 to 728 is disordered; the sequence is VQRRPASPEQSQSSQAIFTAQAIAETTEDPELRSV. The span at 695–709 shows a compositional bias: low complexity; sequence QRRPASPEQSQSSQA.

This sequence belongs to the polyphosphate kinase 1 (PPK1) family. Requires Mg(2+) as cofactor. Post-translationally, an intermediate of this reaction is the autophosphorylated ppk in which a phosphate is covalently linked to a histidine residue through a N-P bond.

The enzyme catalyses [phosphate](n) + ATP = [phosphate](n+1) + ADP. Catalyzes the reversible transfer of the terminal phosphate of ATP to form a long-chain polyphosphate (polyP). The protein is Polyphosphate kinase of Synechocystis sp. (strain ATCC 27184 / PCC 6803 / Kazusa).